A 690-amino-acid polypeptide reads, in one-letter code: Elongation factor G (690 aa).

The tr-type G domain maps to 8 to 283 (EDYRNFGIMA…AVVDYLPSPI (276 aa)). GTP-binding positions include 17-24 (AHIDAGKT), 81-85 (DTPGH), and 135-138 (NKMD).

This sequence belongs to the TRAFAC class translation factor GTPase superfamily. Classic translation factor GTPase family. EF-G/EF-2 subfamily.

Its subcellular location is the cytoplasm. Functionally, catalyzes the GTP-dependent ribosomal translocation step during translation elongation. During this step, the ribosome changes from the pre-translocational (PRE) to the post-translocational (POST) state as the newly formed A-site-bound peptidyl-tRNA and P-site-bound deacylated tRNA move to the P and E sites, respectively. Catalyzes the coordinated movement of the two tRNA molecules, the mRNA and conformational changes in the ribosome. The polypeptide is Elongation factor G (Bradyrhizobium diazoefficiens (strain JCM 10833 / BCRC 13528 / IAM 13628 / NBRC 14792 / USDA 110)).